A 1284-amino-acid polypeptide reads, in one-letter code: Collagen alpha-1(XX) chain (1284 aa).

An N-terminal signal peptide occupies residues 1–22 (MSSGDPAHLGLCLWLWLGATLG). The region spanning 28 to 119 (ASGLLRLAVL…EFVIEDLKSS (92 aa)) is the Fibronectin type-III 1 domain. The segment at 122–171 (DRSSQRPLGSGAPEPTPSHTGSPDPEQASEPQVAFTPSQDPRTPAGPQFR) is disordered. Residues 179 to 354 (DMVFLVDGSW…GALAGLLSRL (176 aa)) enclose the VWFA domain. Fibronectin type-III domains are found at residues 379-468 (APTS…APLP), 469-559 (PPRA…TLAP), 560-647 (PRHL…TKKA), 649-738 (SPSQ…TPST), and 743-833 (PPSN…ACPA). Asn-607 carries an N-linked (GlcNAc...) asparagine glycan. The 196-residue stretch at 842–1037 (GFDLMVAFSL…LQMLQIVCSD (196 aa)) folds into the Laminin G-like domain. 2 disordered regions span residues 1065–1190 (SCSS…EKGE) and 1212–1284 (SFHE…GLWE). Pro residues predominate over residues 1071–1082 (PGPPGPQGPPGL). Collagen-like domains lie at 1071 to 1127 (PGPP…IPGR) and 1133 to 1190 (PKGM…EKGE). Low complexity-rich tracts occupy residues 1112–1125 (LPGL…QGIP) and 1166–1181 (ERGP…LPGP). Residues 1271 to 1284 (SPGQQGASTQGLWE) show a composition bias toward polar residues.

In terms of tissue distribution, high expression in heart, lung, liver, skeletal muscle, kidney, pancreas, spleen, testis, ovary, subthalamic nucleus and fetal liver. Weak expression in other tissues tested.

It is found in the secreted. It localises to the extracellular space. Probable collagen protein. The protein is Collagen alpha-1(XX) chain (COL20A1) of Homo sapiens (Human).